The following is a 339-amino-acid chain: Transposase for insertion sequence element IS1086 (339 aa).

The Integrase catalytic domain occupies 176 to 329; sequence DRLMPGHWEG…SPLQVLAQVL (154 aa).

Belongs to the transposase IS30 family.

Its function is as follows. Required for the transposition of the insertion element. The protein is Transposase for insertion sequence element IS1086 (IS1086) of Cupriavidus metallidurans (strain ATCC 43123 / DSM 2839 / NBRC 102507 / CH34) (Ralstonia metallidurans).